Reading from the N-terminus, the 190-residue chain is Endoribonuclease YbeY (190 aa).

Zn(2+)-binding residues include His147, His151, and His157.

Belongs to the endoribonuclease YbeY family. It depends on Zn(2+) as a cofactor.

Its subcellular location is the cytoplasm. In terms of biological role, single strand-specific metallo-endoribonuclease involved in late-stage 70S ribosome quality control and in maturation of the 3' terminus of the 16S rRNA. In Nitrobacter winogradskyi (strain ATCC 25391 / DSM 10237 / CIP 104748 / NCIMB 11846 / Nb-255), this protein is Endoribonuclease YbeY.